A 179-amino-acid polypeptide reads, in one-letter code: ADP-ribosylation factor-like protein 5B (179 aa).

Glycine 2 carries N-myristoyl glycine lipidation. Residues 23–30, 66–70, 125–128, and alanine 159 each bind GTP; these read GLDNAGKT, DIGGQ, and NKQD.

This sequence belongs to the small GTPase superfamily. Arf family.

Binds and exchanges GTP and GDP. This Mus musculus (Mouse) protein is ADP-ribosylation factor-like protein 5B (Arl5b).